We begin with the raw amino-acid sequence, 213 residues long: RPW8-like protein 3 (213 aa).

One can recognise an RPW8 domain in the interval 1–153 (MPVSEIMAGA…ITRQPTDCIC (153 aa)). A helical transmembrane segment spans residues 7–23 (MAGAALGLALQVLHDAI). Coiled-coil stretches lie at residues 70-93 (EDLK…RRRN) and 125-147 (VDIK…ITRQ). N-linked (GlcNAc...) asparagine glycosylation occurs at asparagine 157.

Belongs to the plant RPW8 protein family.

Its subcellular location is the membrane. Functionally, probable disease resistance (R) protein. This chain is RPW8-like protein 3, found in Arabidopsis thaliana (Mouse-ear cress).